A 73-amino-acid chain; its full sequence is Large ribosomal subunit protein uL30 (73 aa).

The protein belongs to the universal ribosomal protein uL30 family. As to quaternary structure, part of the 50S ribosomal subunit.

The polypeptide is Large ribosomal subunit protein uL30 (Borrelia hermsii (strain HS1 / DAH)).